Consider the following 315-residue polypeptide: Methionyl-tRNA formyltransferase (315 aa).

(6S)-5,6,7,8-tetrahydrofolate is bound at residue 113-116; it reads SLLP.

This sequence belongs to the Fmt family.

It catalyses the reaction L-methionyl-tRNA(fMet) + (6R)-10-formyltetrahydrofolate = N-formyl-L-methionyl-tRNA(fMet) + (6S)-5,6,7,8-tetrahydrofolate + H(+). Attaches a formyl group to the free amino group of methionyl-tRNA(fMet). The formyl group appears to play a dual role in the initiator identity of N-formylmethionyl-tRNA by promoting its recognition by IF2 and preventing the misappropriation of this tRNA by the elongation apparatus. The polypeptide is Methionyl-tRNA formyltransferase (Cronobacter sakazakii (strain ATCC BAA-894) (Enterobacter sakazakii)).